We begin with the raw amino-acid sequence, 426 residues long: Potassium channel subfamily K member 2 (426 aa).

At 1–61 (MLASASRERP…SAINVMKWKT (61 aa)) the chain is on the cytoplasmic side. 2 important for GNG4 binding and L-glutamate release in astrocytes regions span residues 17 to 38 (AAPD…LSFS) and 51 to 61 (DSAINVMKWKT). The chain crosses the membrane as a helical span at residues 62–82 (VSTIFLVVVLYLIIGATVFKA). 2 N-linked (GlcNAc...) asparagine glycosylation sites follow: Asn110 and Asn134. Positions 144-170 (LGSSFFFAGTVITTIGFGNISPRTEGG) form an intramembrane region, pore-forming. Positions 157, 158, 159, and 160 each coordinate K(+). Residues 157–162 (TIGFGN) form a selectivity filter 1 region. Residues 172-192 (IFCIIYALLGIPLFGFLLAGV) traverse the membrane as a helical segment. Over 193 to 222 (GDQLGTIFGKGIAKVEDTFIKWNVSQTKIR) the chain is Cytoplasmic. The chain crosses the membrane as a helical span at residues 223-243 (IISTIIFILFGCVLFVALPAV). Residues 253-283 (ALDAIYFVVITLTTIGFGDYVAGGSDIEYLD) constitute an intramembrane region (pore-forming). Positions 266, 267, 268, and 269 each coordinate K(+). Residues 266–271 (TIGFGD) are selectivity filter 2. A helical membrane pass occupies residues 288-308 (VVWFWILVGLAYFAAVLSMIG). Residues 309 to 426 (DWLRVISKKT…EDIAVIENMK (118 aa)) lie on the Cytoplasmic side of the membrane. Residues 313 to 326 (VISKKTKEEVGEFR) are interaction with AKAP5. The segment at 337-385 (TAEFKETRRRLSVEIYDKFQRATSVKRKLSAELAGNHNQELTPCRRTLS) is essential for chloroform and halothane sensitivity. Residue Ser348 is modified to Phosphoserine; by PKA.

This sequence belongs to the two pore domain potassium channel (TC 1.A.1.8) family. As to quaternary structure, homodimer; disulfide-linked. Forms heterodimers with other 2-pore domain K(+) channel subunits, such as KCNK1, KCNK4, KCNK10 and KCNK18. Interacts with AKAP5; the channel is recruited to postsynaptic microdomains by AKAP5 where it can integrate neurotransmitter receptor signals. Part of a complex composed of AKAP5 and ADRB2. Upon AKAP5 binding, the channel is no longer sensitive to intracellular acidification, membrane stretch or arachidonic acid stimuli. Interacts with POPDC1; the interaction enhances KCNK2 surface expression and is inhibited by cAMP. Interacts (via N-terminus) with G-protein subunit GNG4 (via C-terminus); this interaction confers ion selectivity to L-glutamate and Cl(-) anions. Phosphorylation at Ser-348 controls the reversible conversion from a leak channel to a voltage-dependent channel. As to expression, expressed in cardiomyocytes (at protein level). Expressed in various brain regions including the lateral olfactory tract, piriform cortex of the forebrain, paraventricular and anteromedial thalamic nuclei, brainstem, caudate putamen, nucleus accumbens, neocortex and interpeduncular nucleus. Detected in astrocytes in hippocampus stratum radiatum. In terms of tissue distribution, expressed in brain and kidney.

The protein localises to the cell membrane. Its subcellular location is the endoplasmic reticulum membrane. The protein resides in the cell projection. It localises to the axon. It is found in the dendrite. The protein localises to the postsynaptic density membrane. Its subcellular location is the sarcolemma. The enzyme catalyses K(+)(in) = K(+)(out). It carries out the reaction L-glutamate(out) = L-glutamate(in). The catalysed reaction is chloride(in) = chloride(out). It catalyses the reaction Rb(+)(in) = Rb(+)(out). The enzyme catalyses Cs(+)(in) = Cs(+)(out). Its activity is regulated as follows. Activated by various stimuli including intracellular acidic pH, mechanical stretch and polyunsaturated fatty acids such as arachidonic acid. In terms of biological role, k(+) channel that conducts voltage-dependent outward rectifying currents upon membrane depolarization. Voltage sensing is coupled to K(+) electrochemical gradient in an 'ion flux gating' mode where outward but not inward ion flow opens the gate. Converts to voltage-independent 'leak' conductance mode upon stimulation by various stimuli including mechanical membrane stretch, acidic pH, heat and lipids. Reversibly converts between a voltage-insensitive K(+) 'leak' channel and a voltage-dependent outward rectifying K(+) channel in a phosphorylation-dependent manner. Homo- and heterodimerizes to form functional channels with distinct regulatory and gating properties. In trigeminal ganglia sensory neurons, the heterodimer of KCNK2/TREK-1 and KCNK18/TRESK inhibits neuronal firing and neurogenic inflammation by stabilizing the resting membrane potential at K(+) equilibrium potential as well as by regulating the threshold of action potentials and the spike frequency. At trigeminal A-beta afferent nerves, the heterodimer of KCNK2/TREK-1 and KCNK4/TRAAK is mostly coexpressed at nodes of Ranvier where it conducts voltage-independent mechanosensitive and thermosensitive currents, allowing rapid action potential repolarization, high speed and high frequence saltatory conduction on myelinated nerves to ensure prompt sensory responses. In hippocampal astrocytes, the heterodimer of KCNK2/TREK-1 and KCNK1/TWIK-1 allows passive K(+) conductance under basal conditions, but changes ion selectivity and becomes permeable to L-glutamate and Cl(-) ions upon binding to G-protein subunit GNG4 in stimulated astrocytes. Mediates rapid L-glutamate release in response to activation of G-protein-coupled receptors such as F2R and CNR1. In hippocampal pyramidal neurons, the homodimer of KCNK2/TREK-1 contributes to gamma-aminobutyric acid (GABA) B-induced slow inhibitory postsynaptic potential. Associates with AKAP5 and Gs-protein-coupled receptor B2AR at postsynaptic dense bodies and converts to a leak channel no longer sensitive to stimulation by arachidonic acid, acidic pH or mechanical stress, nor inhibited by Gq-coupled receptors but still under the negative control of Gs-coupled receptors. Permeable to other monovalent cations such as Rb(+) and Cs(+). Functionally, does not display channel activity but reduces the channel activity of isoform 1, isoform 2 and isoform 4 and reduces cell surface expression of isoform 2. This is Potassium channel subfamily K member 2 from Rattus norvegicus (Rat).